Reading from the N-terminus, the 133-residue chain is Large ribosomal subunit protein bL19 (133 aa).

It belongs to the bacterial ribosomal protein bL19 family.

In terms of biological role, this protein is located at the 30S-50S ribosomal subunit interface and may play a role in the structure and function of the aminoacyl-tRNA binding site. The polypeptide is Large ribosomal subunit protein bL19 (Sulfurihydrogenibium sp. (strain YO3AOP1)).